The primary structure comprises 208 residues: Redox-sensing transcriptional repressor Rex (208 aa).

The H-T-H motif DNA-binding region spans 16–55 (LYYRCLSELNEKGEDKVSSAVLERLLKIDAATVRRDFSYF). NAD(+) is bound at residue 90–95 (GVGNLG).

This sequence belongs to the transcriptional regulatory Rex family. In terms of assembly, homodimer.

The protein localises to the cytoplasm. Functionally, modulates transcription in response to changes in cellular NADH/NAD(+) redox state. The sequence is that of Redox-sensing transcriptional repressor Rex from Pediococcus pentosaceus (strain ATCC 25745 / CCUG 21536 / LMG 10740 / 183-1w).